The primary structure comprises 227 residues: Ribosomal RNA small subunit methyltransferase G (227 aa).

S-adenosyl-L-methionine is bound by residues glycine 81, leucine 86, 131-132, and arginine 149; that span reads AE.

It belongs to the methyltransferase superfamily. RNA methyltransferase RsmG family.

The protein resides in the cytoplasm. Its function is as follows. Specifically methylates the N7 position of guanine in position 518 of 16S rRNA. The protein is Ribosomal RNA small subunit methyltransferase G of Rhodococcus jostii (strain RHA1).